We begin with the raw amino-acid sequence, 421 residues long: Peroxisomal succinyl-coenzyme A thioesterase (421 aa).

Ser232 acts as the Charge relay system in catalysis. Position 313 is an N6-succinyllysine (Lys313). Active-site charge relay system residues include Asp326 and His360. The Microbody targeting signal signature appears at 419–421 (CRL).

The protein belongs to the C/M/P thioester hydrolase family. Mainly expressed in liver and kidney. Weakly expressed in other tissues including intestine, adrenal gland and adipose tissues.

The protein resides in the peroxisome. It catalyses the reaction succinyl-CoA + H2O = succinate + CoA + H(+). The catalysed reaction is glutaryl-CoA + H2O = glutarate + CoA + H(+). It functions in the pathway lipid metabolism; fatty acid metabolism. Its function is as follows. Catalyzes the hydrolysis of acyl-CoAs into free fatty acids and coenzyme A (CoASH), regulating their respective intracellular levels. In contrast to its human ortholog, functions essentially as a succinyl-CoA thioesterase with no activity with medium to long chain saturated acyl-CoAs and with a low activity toward glutaryl-CoA. The polypeptide is Peroxisomal succinyl-coenzyme A thioesterase (Acot4) (Mus musculus (Mouse)).